The chain runs to 727 residues: AN1-type zinc finger protein 4 (727 aa).

The Ubiquitin-like domain maps to M28–G103. 2 disordered regions span residues H187–N217 and K238–S264. Positions K238–P248 are enriched in basic residues. An AN1-type zinc finger spans residues K661–G708. Zn(2+) is bound by residues C667, C670, C682, C684, C689, H692, H698, and C700.

This Homo sapiens (Human) protein is AN1-type zinc finger protein 4 (ZFAND4).